The chain runs to 68 residues: Conotoxin Lp5.2 (68 aa).

The N-terminal stretch at 1–19 (MRCVPVFIILLLLASPAAP) is a signal peptide. Residues 20-54 (KSLETRIQNDLIRAGLTDADLKTEKGFLSGLLNVA) constitute a propeptide that is removed on maturation.

The protein belongs to the conotoxin T superfamily. Post-translationally, contains 2 disulfide bonds that can be either 'C1-C3, C2-C4' or 'C1-C4, C2-C3', since these disulfide connectivities have been observed for conotoxins with cysteine framework V (for examples, see AC P0DQQ7 and AC P81755). Expressed by the venom duct.

It localises to the secreted. In Conus leopardus (Leopard cone), this protein is Conotoxin Lp5.2.